The primary structure comprises 1045 residues: Bifunctional glutamine synthetase adenylyltransferase/adenylyl-removing enzyme (1045 aa).

The tract at residues methionine 1–leucine 527 is adenylyl removase. The segment at asparagine 533–phenylalanine 1045 is adenylyl transferase.

The protein belongs to the GlnE family. It depends on Mg(2+) as a cofactor.

The enzyme catalyses [glutamine synthetase]-O(4)-(5'-adenylyl)-L-tyrosine + phosphate = [glutamine synthetase]-L-tyrosine + ADP. The catalysed reaction is [glutamine synthetase]-L-tyrosine + ATP = [glutamine synthetase]-O(4)-(5'-adenylyl)-L-tyrosine + diphosphate. In terms of biological role, involved in the regulation of glutamine synthetase GlnA, a key enzyme in the process to assimilate ammonia. When cellular nitrogen levels are high, the C-terminal adenylyl transferase (AT) inactivates GlnA by covalent transfer of an adenylyl group from ATP to specific tyrosine residue of GlnA, thus reducing its activity. Conversely, when nitrogen levels are low, the N-terminal adenylyl removase (AR) activates GlnA by removing the adenylyl group by phosphorolysis, increasing its activity. The regulatory region of GlnE binds the signal transduction protein PII (GlnB) which indicates the nitrogen status of the cell. In Corynebacterium glutamicum (strain ATCC 13032 / DSM 20300 / JCM 1318 / BCRC 11384 / CCUG 27702 / LMG 3730 / NBRC 12168 / NCIMB 10025 / NRRL B-2784 / 534), this protein is Bifunctional glutamine synthetase adenylyltransferase/adenylyl-removing enzyme.